The following is a 245-amino-acid chain: Aliphatic sulfonates import ATP-binding protein SsuB (245 aa).

One can recognise an ABC transporter domain in the interval 6 to 225 (VTVRGLRRAF…SRGDEGFDDL (220 aa)). Position 38–45 (38–45 (GLSGSGKS)) interacts with ATP.

It belongs to the ABC transporter superfamily. Aliphatic sulfonates importer (TC 3.A.1.17.2) family. As to quaternary structure, the complex is composed of two ATP-binding proteins (SsuB), two transmembrane proteins (SsuC) and a solute-binding protein (SsuA).

The protein resides in the cell membrane. It catalyses the reaction ATP + H2O + aliphatic sulfonate-[sulfonate-binding protein]Side 1 = ADP + phosphate + aliphatic sulfonateSide 2 + [sulfonate-binding protein]Side 1.. Part of the ABC transporter complex SsuABC involved in aliphatic sulfonates import. Responsible for energy coupling to the transport system. The protein is Aliphatic sulfonates import ATP-binding protein SsuB of Mycobacterium sp. (strain MCS).